The primary structure comprises 452 residues: Kremen protein 1 (452 aa).

Positions 1–22 (MVMDIWTISLRILLFPSALVLC) are cleaved as a signal peptide. At 23-369 (SDSFHSECYT…TTSPSRPSGH (347 aa)) the chain is on the extracellular side. The Kringle domain maps to 29–112 (ECYTVNGADY…YWKYCDIPAC (84 aa)). 8 disulfide bridges follow: Cys30–Cys112, Cys53–Cys93, Cys82–Cys107, Cys120–Cys184, Cys145–Cys165, Cys149–Cys167, Cys188–Cys196, and Cys212–Cys238. Asn43 and Asn57 each carry an N-linked (GlcNAc...) asparagine glycan. A WSC domain is found at 114-208 (MPGNLGCFRD…DGRIILFDSL (95 aa)). The region spanning 212–319 (CGGNYSTDSA…QGFSVVYEAF (108 aa)) is the CUB domain. 5 N-linked (GlcNAc...) asparagine glycosylation sites follow: Asn215, Asn253, Asn291, Asn328, and Asn344. A helical transmembrane segment spans residues 370-390 (VPGWTIYALTGLLILTIIAIS). At 391-452 (AKALLHISMK…HDDRNPLVGE (62 aa)) the chain is on the cytoplasmic side.

In terms of assembly, interacts with lrp6.

The protein resides in the cell membrane. Receptor for Dickkopf proteins. Cooperates with DKK1/2 proteins to inhibit Wnt/beta-catenin signaling by promoting the endocytosis of Wnt receptors LRP5 and LRP6. In the absence of DKK1, potentiates Wnt-beta-catenin signaling by maintaining LRP5 or LRP6 at the cell membrane. The polypeptide is Kremen protein 1 (kremen1) (Xenopus laevis (African clawed frog)).